The sequence spans 331 residues: L-lactate dehydrogenase A chain (331 aa).

NAD(+) contacts are provided by residues 29-57 (GMVG…MEDK) and Arg-98. Substrate contacts are provided by Arg-105, Asn-137, and Arg-168. An NAD(+)-binding site is contributed by Asn-137. His-192 (proton acceptor) is an active-site residue. Thr-247 is a binding site for substrate.

This sequence belongs to the LDH/MDH superfamily. LDH family. As to quaternary structure, homotetramer.

It is found in the cytoplasm. The enzyme catalyses (S)-lactate + NAD(+) = pyruvate + NADH + H(+). It participates in fermentation; pyruvate fermentation to lactate; (S)-lactate from pyruvate: step 1/1. In terms of biological role, interconverts simultaneously and stereospecifically pyruvate and lactate with concomitant interconversion of NADH and NAD(+). The chain is L-lactate dehydrogenase A chain (ldha) from Notothenia neglecta (Yellowbelly rockcod).